The following is a 344-amino-acid chain: GTP 3',8-cyclase (344 aa).

The region spanning 19-245 is the Radical SAM core domain; the sequence is PFGRAVTYLR…DIPYRTGGPA (227 aa). R28 lines the GTP pocket. The [4Fe-4S] cluster site is built by C35 and C39. Y41 is an S-adenosyl-L-methionine binding site. C42 provides a ligand contact to [4Fe-4S] cluster. Residue R77 coordinates GTP. G81 provides a ligand contact to S-adenosyl-L-methionine. T111 is a binding site for GTP. S135 is an S-adenosyl-L-methionine binding site. K171 is a binding site for GTP. M205 provides a ligand contact to S-adenosyl-L-methionine. [4Fe-4S] cluster-binding residues include C268 and C271. 273–275 lines the GTP pocket; it reads RVR. C285 is a binding site for [4Fe-4S] cluster.

It belongs to the radical SAM superfamily. MoaA family. Monomer and homodimer. [4Fe-4S] cluster serves as cofactor.

It catalyses the reaction GTP + AH2 + S-adenosyl-L-methionine = (8S)-3',8-cyclo-7,8-dihydroguanosine 5'-triphosphate + 5'-deoxyadenosine + L-methionine + A + H(+). The protein operates within cofactor biosynthesis; molybdopterin biosynthesis. Its function is as follows. Catalyzes the cyclization of GTP to (8S)-3',8-cyclo-7,8-dihydroguanosine 5'-triphosphate. The protein is GTP 3',8-cyclase of Brucella canis (strain ATCC 23365 / NCTC 10854 / RM-666).